Reading from the N-terminus, the 229-residue chain is Ribonuclease 3 (229 aa).

The 123-residue stretch at 5 to 127 folds into the RNase III domain; that stretch reads LSRLERQLGY…LIGAIYLDAG (123 aa). A Mg(2+)-binding site is contributed by Glu40. The active site involves Asp44. Residues Asp113 and Glu116 each coordinate Mg(2+). Glu116 is a catalytic residue. Residues 154-224 enclose the DRBM domain; sequence DPKTRLQEFL…AAAALIALGV (71 aa).

This sequence belongs to the ribonuclease III family. As to quaternary structure, homodimer. Mg(2+) serves as cofactor.

It is found in the cytoplasm. The enzyme catalyses Endonucleolytic cleavage to 5'-phosphomonoester.. Functionally, digests double-stranded RNA. Involved in the processing of primary rRNA transcript to yield the immediate precursors to the large and small rRNAs (23S and 16S). Processes some mRNAs, and tRNAs when they are encoded in the rRNA operon. Processes pre-crRNA and tracrRNA of type II CRISPR loci if present in the organism. In Pseudomonas syringae pv. tomato (strain ATCC BAA-871 / DC3000), this protein is Ribonuclease 3.